The sequence spans 135 residues: Protein NrdI (135 aa).

It belongs to the NrdI family.

Its function is as follows. Probably involved in ribonucleotide reductase function. The sequence is that of Protein NrdI from Pectobacterium carotovorum subsp. carotovorum (strain PC1).